The sequence spans 305 residues: Autophagy-related protein 27 (305 aa).

An N-terminal signal peptide occupies residues 1-22 (MARYKGLSILSLFAVFSSLASA). Residues 23 to 242 (ELDCSNIKVD…EDGGSAPSGH (220 aa)) lie on the Lumenal side of the membrane. In terms of domain architecture, MRH spans 24–231 (LDCSNIKVDG…EWKTKYACEN (208 aa)). Cystine bridges form between cysteine 26–cysteine 66 and cysteine 74–cysteine 81. N-linked (GlcNAc...) asparagine glycosylation occurs at asparagine 58. Asparagine 85 carries an N-linked (GlcNAc...) asparagine glycan. Cysteine 156 and cysteine 229 are joined by a disulfide. The segment at 163-202 (LEGLESPKPDGDKKKDGEKKDDDKKDNKDKEGKSKRDGEE) is disordered. Residues 243–263 (WGFFTWVIVLYVVLVSLPLLS) form a helical membrane-spanning segment. Residues 264 to 305 (ERVTNVRCHSQPVPVHFGLSDIRLVAQLQPVWSSRVGLASSQ) lie on the Cytoplasmic side of the membrane.

The protein belongs to the ATG27 family.

It is found in the cytoplasmic vesicle membrane. It localises to the golgi apparatus membrane. The protein resides in the mitochondrion membrane. The protein localises to the preautophagosomal structure membrane. Functionally, effector of phosphatidylinositol 3-phosphate kinase signaling. Regulates the cytoplasm to vacuole transport (Cvt) vesicle formation. Plays a role in ATG protein retrieval from the pre-autophagosomal structure (PAS). The protein is Autophagy-related protein 27 of Arthroderma benhamiae (strain ATCC MYA-4681 / CBS 112371) (Trichophyton mentagrophytes).